A 295-amino-acid polypeptide reads, in one-letter code: 4-hydroxy-tetrahydrodipicolinate synthase (295 aa).

Position 46 (Thr46) interacts with pyruvate. The active-site Proton donor/acceptor is Tyr134. The active-site Schiff-base intermediate with substrate is the Lys162. Pyruvate is bound at residue Ile205.

It belongs to the DapA family. Homotetramer; dimer of dimers.

It localises to the cytoplasm. The catalysed reaction is L-aspartate 4-semialdehyde + pyruvate = (2S,4S)-4-hydroxy-2,3,4,5-tetrahydrodipicolinate + H2O + H(+). It participates in amino-acid biosynthesis; L-lysine biosynthesis via DAP pathway; (S)-tetrahydrodipicolinate from L-aspartate: step 3/4. Functionally, catalyzes the condensation of (S)-aspartate-beta-semialdehyde [(S)-ASA] and pyruvate to 4-hydroxy-tetrahydrodipicolinate (HTPA). This chain is 4-hydroxy-tetrahydrodipicolinate synthase, found in Anaeromyxobacter sp. (strain Fw109-5).